The following is a 222-amino-acid chain: MATASSLFLASPVATAPTARARSTPSASPARPSLRLRRPSTLAAAAVQAEHQPAVAAAPKPPALPFRVGHGFDLHRLEPGLPLIIGGIDIPHDRGCDAHSDGDVLLHCVVDAILGALGLPDIGQIFPDSDPRWKGADSSVFMREAVKLMHEAGYELGNLDATLILQKPKISPFKETIRSNLCDLLGADPSVVNLKAKTHEKVDSLGENRSIAAHTVVLLMRK.

Residues methionine 1 to alanine 43 constitute a chloroplast transit peptide. A divalent metal cation contacts are provided by aspartate 73 and histidine 75. Substrate contacts are provided by residues aspartate 73–histidine 75, histidine 99–serine 100, aspartate 103–aspartate 111, aspartate 121–glycine 123, phenylalanine 126–aspartate 130, aspartate 130, leucine 165–serine 171, and alanine 196–glutamate 200. Residue histidine 107 participates in a divalent metal cation binding.

The protein belongs to the IspF family. In terms of assembly, homotrimer. Requires a divalent metal cation as cofactor. Expressed in roots, leaves, stems, leaf sheaths and young panicles.

It is found in the plastid. Its subcellular location is the chloroplast. The catalysed reaction is 4-CDP-2-C-methyl-D-erythritol 2-phosphate = 2-C-methyl-D-erythritol 2,4-cyclic diphosphate + CMP. The protein operates within isoprenoid biosynthesis; isopentenyl diphosphate biosynthesis via DXP pathway; isopentenyl diphosphate from 1-deoxy-D-xylulose 5-phosphate: step 4/6. Enzyme of the plastid non-mevalonate pathway for isoprenoid biosynthesis that converts 4-diphosphocytidyl-2C-methyl-D-erythritol 2-phosphate into 2C-methyl-D-erythritol 2,4-cyclodiphosphate and CMP. Is essential for chloroplast development. This Oryza sativa subsp. japonica (Rice) protein is 2-C-methyl-D-erythritol 2,4-cyclodiphosphate synthase, chloroplastic.